A 78-amino-acid polypeptide reads, in one-letter code: Small nuclear ribonucleoprotein F (78 aa).

The region spanning 7–78 (NPKPFLQGLI…NVLWVGESTV (72 aa)) is the Sm domain.

This sequence belongs to the snRNP Sm proteins family. SmF/LSm6 subfamily. In terms of assembly, belongs to the 40S cdc5-associated complex (or cwf complex), a spliceosome sub-complex reminiscent of a late-stage spliceosome composed of the U2, U5 and U6 snRNAs and at least brr2, cdc5, cwf2/prp3, cwf3/syf1, cwf4/syf3, cwf5/ecm2, spp42/cwf6, cwf7/spf27, cwf8, cwf9, cwf10, cwf11, cwf12, prp45/cwf13, cwf14, cwf15, cwf16, cwf17, cwf18, cwf19, cwf20, cwf21, cwf22, cwf23, cwf24, cwf25, cwf26, cyp7/cwf27, cwf28, cwf29/ist3, lea1, msl1, prp5/cwf1, prp10, prp12/sap130, prp17, prp22, sap61, sap62, sap114, sap145, slu7, smb1, smd1, smd3, smf1, smg1 and syf2.

The protein resides in the nucleus. The protein localises to the cytoplasm. Plays a role in pre-mRNA splicing as a core component of the spliceosomal U1, U2, U4 and U5 small nuclear ribonucleoproteins (snRNPs), the building blocks of the spliceosome. This is Small nuclear ribonucleoprotein F (smf1) from Schizosaccharomyces pombe (strain 972 / ATCC 24843) (Fission yeast).